The chain runs to 313 residues: Pyrimidine-specific ribonucleoside hydrolase RihA (313 aa).

Residue His-240 is part of the active site.

The protein belongs to the IUNH family. RihA subfamily.

In terms of biological role, hydrolyzes cytidine or uridine to ribose and cytosine or uracil, respectively. The sequence is that of Pyrimidine-specific ribonucleoside hydrolase RihA from Enterobacter sp. (strain 638).